The sequence spans 323 residues: Beta-ketoacyl-[acyl-carrier-protein] synthase III (323 aa).

Active-site residues include cysteine 114 and histidine 250. Positions 251 to 255 (QANRR) are ACP-binding. The active site involves asparagine 280.

Belongs to the thiolase-like superfamily. FabH family. In terms of assembly, homodimer.

Its subcellular location is the cytoplasm. It catalyses the reaction malonyl-[ACP] + acetyl-CoA + H(+) = 3-oxobutanoyl-[ACP] + CO2 + CoA. It participates in lipid metabolism; fatty acid biosynthesis. Functionally, catalyzes the condensation reaction of fatty acid synthesis by the addition to an acyl acceptor of two carbons from malonyl-ACP. Catalyzes the first condensation reaction which initiates fatty acid synthesis and may therefore play a role in governing the total rate of fatty acid production. Possesses both acetoacetyl-ACP synthase and acetyl transacylase activities. Its substrate specificity determines the biosynthesis of branched-chain and/or straight-chain of fatty acids. The chain is Beta-ketoacyl-[acyl-carrier-protein] synthase III from Rhodospirillum centenum (strain ATCC 51521 / SW).